The following is a 22-amino-acid chain: Mu-conotoxin GIIIC (22 aa).

3 disulfide bridges follow: C3–C15, C4–C20, and C10–C21. Residues P6, P7, and P17 each carry the 4-hydroxyproline modification. Position 22 is an alanine amide (A22).

This sequence belongs to the conotoxin M superfamily. As to expression, expressed by the venom duct.

The protein resides in the secreted. In terms of biological role, mu-conotoxins block voltage-gated sodium channels (Nav). This toxin shows potent activity on Nav1.4/SCN4A (IC(50)=286 nM), and weak activity on mNav1.6/SCN8A. The polypeptide is Mu-conotoxin GIIIC (Conus geographus (Geography cone)).